The sequence spans 509 residues: MTETLRLTPAGLTLADLRRVLAGPVRLEIAPRDLEAAEASARTVAEVIGSGRTVYGINTGFGLLARTRIEPDRLAQLQRNLVLSHAAGTGEAMPDRVVRLMLVLKVASLLRGFSGVRGEVIRALAALVSAEALPLVPAKGSVGASGDLAPLAHLVLPLLGLGQVRLAGRTVPAADGLAAAGLRPLELGPKEGLALLNGTQASTALALAGLVAAEWAFDAALVAGALSIDAAQGSDTPFDARIHALRGQRGQIDAAAGYRRLLAGSPIRASHLSCARVQDPYCLRCQPQVMGACLDQLRFAAGTLATEANAVTDNPLVFPDDGDILSGGNFHAEPVAMAADQIALALAEIGSLSERRTAMLVDPHHNGGLPAFLVTDGGLNSGFMIAQVTAAALASENKGLAHPASVDSIPTSANQEDHVSMATWAARRLLEMADNAAGIVAVELLAACQGIDFRRPLRTSAPLEAVHAAVREEVGFYDRDRHFAPDIEAARGLIAAGRAASGTDWLAAA.

The segment at residues 144 to 146 (ASG) is a cross-link (5-imidazolinone (Ala-Gly)). Residue Ser145 is modified to 2,3-didehydroalanine (Ser).

This sequence belongs to the PAL/histidase family. In terms of processing, contains an active site 4-methylidene-imidazol-5-one (MIO), which is formed autocatalytically by cyclization and dehydration of residues Ala-Ser-Gly.

Its subcellular location is the cytoplasm. The enzyme catalyses L-histidine = trans-urocanate + NH4(+). It participates in amino-acid degradation; L-histidine degradation into L-glutamate; N-formimidoyl-L-glutamate from L-histidine: step 1/3. This is Histidine ammonia-lyase from Rhodospirillum centenum (strain ATCC 51521 / SW).